The following is an 850-amino-acid chain: Trimethylamine-N-oxide reductase (850 aa).

The tat-type signal signal peptide spans 1-39 (MKNKDSLHVSRRRFLAQLGGLTVAGMLGPSLLTPRSARA). Ser191 is a Mo-bis(molybdopterin guanine dinucleotide) binding site.

The protein belongs to the prokaryotic molybdopterin-containing oxidoreductase family. It depends on Mo-bis(molybdopterin guanine dinucleotide) as a cofactor. Post-translationally, predicted to be exported by the Tat system. The position of the signal peptide cleavage has not been experimentally proven.

It localises to the periplasm. It catalyses the reaction trimethylamine + 2 Fe(III)-[cytochrome c] + H2O = trimethylamine N-oxide + 2 Fe(II)-[cytochrome c] + 3 H(+). Reduces trimethylamine-N-oxide (TMAO) into trimethylamine; an anaerobic reaction coupled to energy-yielding reactions. The chain is Trimethylamine-N-oxide reductase (torA) from Salmonella typhi.